Here is a 476-residue protein sequence, read N- to C-terminus: Aspartyl/glutamyl-tRNA(Asn/Gln) amidotransferase subunit B (476 aa).

Belongs to the GatB/GatE family. GatB subfamily. Heterotrimer of A, B and C subunits.

It catalyses the reaction L-glutamyl-tRNA(Gln) + L-glutamine + ATP + H2O = L-glutaminyl-tRNA(Gln) + L-glutamate + ADP + phosphate + H(+). It carries out the reaction L-aspartyl-tRNA(Asn) + L-glutamine + ATP + H2O = L-asparaginyl-tRNA(Asn) + L-glutamate + ADP + phosphate + 2 H(+). In terms of biological role, allows the formation of correctly charged Asn-tRNA(Asn) or Gln-tRNA(Gln) through the transamidation of misacylated Asp-tRNA(Asn) or Glu-tRNA(Gln) in organisms which lack either or both of asparaginyl-tRNA or glutaminyl-tRNA synthetases. The reaction takes place in the presence of glutamine and ATP through an activated phospho-Asp-tRNA(Asn) or phospho-Glu-tRNA(Gln). The sequence is that of Aspartyl/glutamyl-tRNA(Asn/Gln) amidotransferase subunit B from Shouchella clausii (strain KSM-K16) (Alkalihalobacillus clausii).